The sequence spans 83 residues: Cytochrome b559 subunit alpha (83 aa).

Residues 21–35 traverse the membrane as a helical segment; it reads VIHSITIPSLFIAGW. Position 23 (H23) interacts with heme.

The protein belongs to the PsbE/PsbF family. Heterodimer of an alpha subunit and a beta subunit. PSII is composed of 1 copy each of membrane proteins PsbA, PsbB, PsbC, PsbD, PsbE, PsbF, PsbH, PsbI, PsbJ, PsbK, PsbL, PsbM, PsbT, PsbX, PsbY, PsbZ, Psb30/Ycf12, at least 3 peripheral proteins of the oxygen-evolving complex and a large number of cofactors. It forms dimeric complexes. It depends on heme b as a cofactor.

It is found in the plastid. It localises to the chloroplast thylakoid membrane. In terms of biological role, this b-type cytochrome is tightly associated with the reaction center of photosystem II (PSII). PSII is a light-driven water:plastoquinone oxidoreductase that uses light energy to abstract electrons from H(2)O, generating O(2) and a proton gradient subsequently used for ATP formation. It consists of a core antenna complex that captures photons, and an electron transfer chain that converts photonic excitation into a charge separation. The protein is Cytochrome b559 subunit alpha of Citrus sinensis (Sweet orange).